Consider the following 145-residue polypeptide: Small ribosomal subunit protein uS12 (145 aa).

It belongs to the universal ribosomal protein uS12 family. As to quaternary structure, component of the small ribosomal subunit. Mature ribosomes consist of a small (40S) and a large (60S) subunit. The 40S subunit contains about 32 different proteins and 1 molecule of RNA (18S). The 60S subunit contains 45 different proteins and 3 molecules of RNA (25S, 5.8S and 5S).

Its subcellular location is the cytoplasm. In terms of biological role, component of the ribosome, a large ribonucleoprotein complex responsible for the synthesis of proteins in the cell. The small ribosomal subunit (SSU) binds messenger RNAs (mRNAs) and translates the encoded message by selecting cognate aminoacyl-transfer RNA (tRNA) molecules. The large subunit (LSU) contains the ribosomal catalytic site termed the peptidyl transferase center (PTC), which catalyzes the formation of peptide bonds, thereby polymerizing the amino acids delivered by tRNAs into a polypeptide chain. The nascent polypeptides leave the ribosome through a tunnel in the LSU and interact with protein factors that function in enzymatic processing, targeting, and the membrane insertion of nascent chains at the exit of the ribosomal tunnel. This chain is Small ribosomal subunit protein uS12 (RPS23A), found in Candida albicans (strain SC5314 / ATCC MYA-2876) (Yeast).